A 476-amino-acid chain; its full sequence is Bifunctional protein GlmU (476 aa).

Residues 1-232 (MGDLAAIILA…PVEVMGVNDR (232 aa)) are pyrophosphorylase. UDP-N-acetyl-alpha-D-glucosamine contacts are provided by residues 9–12 (LAAG), Lys-23, Gln-75, and 80–81 (GT). Asp-105 contributes to the Mg(2+) binding site. The UDP-N-acetyl-alpha-D-glucosamine site is built by Gly-142, Glu-157, Asn-172, and Asn-230. Asn-230 contributes to the Mg(2+) binding site. Residues 233–253 (AQLAEAGRFARQRINRELMLD) are linker. Positions 254 to 476 (GVTIVDPAAT…DGWKLKQRDQ (223 aa)) are N-acetyltransferase. UDP-N-acetyl-alpha-D-glucosamine is bound by residues Arg-353 and Lys-371. Residue His-383 is the Proton acceptor of the active site. 2 residues coordinate UDP-N-acetyl-alpha-D-glucosamine: Tyr-386 and Asn-397. Acetyl-CoA-binding positions include 406–407 (NY), Ser-425, Ala-443, and Arg-460.

The protein in the N-terminal section; belongs to the N-acetylglucosamine-1-phosphate uridyltransferase family. It in the C-terminal section; belongs to the transferase hexapeptide repeat family. In terms of assembly, homotrimer. Mg(2+) serves as cofactor.

It is found in the cytoplasm. It carries out the reaction alpha-D-glucosamine 1-phosphate + acetyl-CoA = N-acetyl-alpha-D-glucosamine 1-phosphate + CoA + H(+). The enzyme catalyses N-acetyl-alpha-D-glucosamine 1-phosphate + UTP + H(+) = UDP-N-acetyl-alpha-D-glucosamine + diphosphate. Its pathway is nucleotide-sugar biosynthesis; UDP-N-acetyl-alpha-D-glucosamine biosynthesis; N-acetyl-alpha-D-glucosamine 1-phosphate from alpha-D-glucosamine 6-phosphate (route II): step 2/2. The protein operates within nucleotide-sugar biosynthesis; UDP-N-acetyl-alpha-D-glucosamine biosynthesis; UDP-N-acetyl-alpha-D-glucosamine from N-acetyl-alpha-D-glucosamine 1-phosphate: step 1/1. It participates in bacterial outer membrane biogenesis; LPS lipid A biosynthesis. Functionally, catalyzes the last two sequential reactions in the de novo biosynthetic pathway for UDP-N-acetylglucosamine (UDP-GlcNAc). The C-terminal domain catalyzes the transfer of acetyl group from acetyl coenzyme A to glucosamine-1-phosphate (GlcN-1-P) to produce N-acetylglucosamine-1-phosphate (GlcNAc-1-P), which is converted into UDP-GlcNAc by the transfer of uridine 5-monophosphate (from uridine 5-triphosphate), a reaction catalyzed by the N-terminal domain. The sequence is that of Bifunctional protein GlmU from Geobacter metallireducens (strain ATCC 53774 / DSM 7210 / GS-15).